Reading from the N-terminus, the 220-residue chain is MKLNKYIDHTLLKQDAKKKQIDSLLSEAREYDFASVCVNPTWVEHAKKGLEGTDVKVCTVVGFPLGATTSAVKAFETKEAIQNGADEIDMVINVGALKSGNLALVESDIRAVVEASGDKLVKVIIEACLLTDQEKVVVCQLAQKAGADFVKTSTGFSTGGATIADVTLMRETVGSDMGVKAAGGARSYADALAFVEAGATRIGTSAGVAILKGELADGDY.

D89 (proton donor/acceptor) is an active-site residue. K151 acts as the Schiff-base intermediate with acetaldehyde in catalysis. K180 acts as the Proton donor/acceptor in catalysis.

The protein belongs to the DeoC/FbaB aldolase family. DeoC type 1 subfamily.

The protein resides in the cytoplasm. It catalyses the reaction 2-deoxy-D-ribose 5-phosphate = D-glyceraldehyde 3-phosphate + acetaldehyde. It participates in carbohydrate degradation; 2-deoxy-D-ribose 1-phosphate degradation; D-glyceraldehyde 3-phosphate and acetaldehyde from 2-deoxy-alpha-D-ribose 1-phosphate: step 2/2. In terms of biological role, catalyzes a reversible aldol reaction between acetaldehyde and D-glyceraldehyde 3-phosphate to generate 2-deoxy-D-ribose 5-phosphate. In Streptococcus pneumoniae serotype 4 (strain ATCC BAA-334 / TIGR4), this protein is Deoxyribose-phosphate aldolase.